The following is a 177-amino-acid chain: ATP synthase subunit delta (177 aa).

It belongs to the ATPase delta chain family. In terms of assembly, F-type ATPases have 2 components, F(1) - the catalytic core - and F(0) - the membrane proton channel. F(1) has five subunits: alpha(3), beta(3), gamma(1), delta(1), epsilon(1). F(0) has three main subunits: a(1), b(2) and c(10-14). The alpha and beta chains form an alternating ring which encloses part of the gamma chain. F(1) is attached to F(0) by a central stalk formed by the gamma and epsilon chains, while a peripheral stalk is formed by the delta and b chains.

The protein localises to the cell inner membrane. Its function is as follows. F(1)F(0) ATP synthase produces ATP from ADP in the presence of a proton or sodium gradient. F-type ATPases consist of two structural domains, F(1) containing the extramembraneous catalytic core and F(0) containing the membrane proton channel, linked together by a central stalk and a peripheral stalk. During catalysis, ATP synthesis in the catalytic domain of F(1) is coupled via a rotary mechanism of the central stalk subunits to proton translocation. In terms of biological role, this protein is part of the stalk that links CF(0) to CF(1). It either transmits conformational changes from CF(0) to CF(1) or is implicated in proton conduction. This chain is ATP synthase subunit delta, found in Aliivibrio fischeri (strain ATCC 700601 / ES114) (Vibrio fischeri).